The sequence spans 296 residues: 4-hydroxybenzoate octaprenyltransferase (296 aa).

A run of 8 helical transmembrane segments spans residues 28 to 48 (IGTL…SDGI), 51 to 71 (LAVL…GCVI), 102 to 122 (LLLT…LNHL), 143 to 163 (FFPI…PMAF), 174 to 194 (AWIL…VYAM), 212 to 232 (FGRY…LLMA), 233 to 253 (VLGA…IVLL), and 274 to 294 (FLAN…HTFF).

It belongs to the UbiA prenyltransferase family. Mg(2+) is required as a cofactor.

The protein localises to the cell inner membrane. It catalyses the reaction all-trans-octaprenyl diphosphate + 4-hydroxybenzoate = 4-hydroxy-3-(all-trans-octaprenyl)benzoate + diphosphate. The protein operates within cofactor biosynthesis; ubiquinone biosynthesis. Its function is as follows. Catalyzes the prenylation of para-hydroxybenzoate (PHB) with an all-trans polyprenyl group. Mediates the second step in the final reaction sequence of ubiquinone-8 (UQ-8) biosynthesis, which is the condensation of the polyisoprenoid side chain with PHB, generating the first membrane-bound Q intermediate 3-octaprenyl-4-hydroxybenzoate. The chain is 4-hydroxybenzoate octaprenyltransferase from Neisseria meningitidis serogroup B (strain ATCC BAA-335 / MC58).